A 147-amino-acid polypeptide reads, in one-letter code: 3-hydroxyacyl-[acyl-carrier-protein] dehydratase FabZ (147 aa).

Residue His51 is part of the active site.

It belongs to the thioester dehydratase family. FabZ subfamily.

The protein localises to the cytoplasm. The enzyme catalyses a (3R)-hydroxyacyl-[ACP] = a (2E)-enoyl-[ACP] + H2O. Functionally, involved in unsaturated fatty acids biosynthesis. Catalyzes the dehydration of short chain beta-hydroxyacyl-ACPs and long chain saturated and unsaturated beta-hydroxyacyl-ACPs. This Anaplasma marginale (strain Florida) protein is 3-hydroxyacyl-[acyl-carrier-protein] dehydratase FabZ.